A 335-amino-acid polypeptide reads, in one-letter code: Protein PXR1 (335 aa).

Residues 25 to 71 form the G-patch domain; sequence KSRFGHKYLEKLGWEPGKGLGHASHAMSTHIKVTIKDDTMGLGAKLK. Positions 155-310 are disordered; that stretch reads DDAEDAKVSG…PPTISTRLSV (156 aa). The span at 163–175 shows a compositional bias: basic residues; it reads SGKHRDRKSRAKR. Residues 183-209 are compositionally biased toward basic and acidic residues; that stretch reads LKEKCRDIDRTRKSKRKEKEQEKEKNR. Basic residues predominate over residues 226 to 257; the sequence is KKDKKDKKEKKEKKEKKEKKEKKHKEKSNKRL.

It belongs to the PINX1 family.

Its subcellular location is the nucleus. The protein resides in the nucleolus. Functionally, involved in rRNA-processing at A0, A1 and A2 sites and negatively regulates telomerase. The sequence is that of Protein PXR1 (PXR1) from Eremothecium gossypii (strain ATCC 10895 / CBS 109.51 / FGSC 9923 / NRRL Y-1056) (Yeast).